A 364-amino-acid polypeptide reads, in one-letter code: ATP synthase gamma chain, chloroplastic (364 aa).

Residues 1–41 (MACSLSFSSSVSTFHLPTTTQSTQAPPNNATTLPTTNPIQC) constitute a chloroplast transit peptide. The tract at residues 17-36 (PTTTQSTQAPPNNATTLPTT) is disordered. Positions 25–36 (APPNNATTLPTT) are enriched in low complexity. Residue cysteine 130 is part of the active site. The cysteines at positions 240 and 246 are disulfide-linked.

It belongs to the ATPase gamma chain family. F-type ATPases have 2 components, CF(1) - the catalytic core - and CF(0) - the membrane proton channel. CF(1) has five subunits: alpha(3), beta(3), gamma(1), delta(1), epsilon(1). CF(0) has four main subunits: a, b, b' and c. Post-translationally, disulfide bond; Cys-240 and Cys-246 are known to form a disulfide bridge in the dark which gives rise to an inactive enzyme. Activation can be brought about by a ferredoxin-dependent reduction of the disulfide bond in the light.

It localises to the plastid. The protein resides in the chloroplast thylakoid membrane. Functionally, produces ATP from ADP in the presence of a proton gradient across the membrane. The gamma chain is believed to be important in regulating ATPase activity and the flow of protons through the CF(0) complex. The sequence is that of ATP synthase gamma chain, chloroplastic (ATPC) from Spinacia oleracea (Spinach).